The following is a 180-amino-acid chain: Nucleoplasmin-3 (180 aa).

The residue at position 2 (alanine 2) is an N-acetylalanine. 2 positions are modified to phosphoserine: serine 13 and serine 16. The residue at position 27 (arginine 27) is an Omega-N-methylarginine. Residues 141–180 (TMSNDVSEEESEEEEEEEDSDEEEAELCPILPAKKQGGRP) form a disordered region. Over residues 146–166 (VSEEESEEEEEEEDSDEEEAE) the composition is skewed to acidic residues. 3 positions are modified to phosphoserine: serine 147, serine 151, and serine 160.

This sequence belongs to the nucleoplasmin family. As to quaternary structure, interacts with NPM (via N-terminus). Forms a pentamer with NPM at a ratio 4:1 (NPM3/NPM). Two pentamers form a decamer. Post-translationally, phosphorylated.

The protein resides in the nucleus. It is found in the nucleolus. Plays a role in the regulation of diverse cellular processes such as ribosome biogenesis, chromatin remodeling or protein chaperoning. Modulates the histone chaperone function and the RNA-binding activity of nucleolar phosphoprotein B23/NPM. Efficiently mediates chromatin remodeling when included in a pentamer containing NPM3 and NPM. The protein is Nucleoplasmin-3 (NPM3) of Pongo abelii (Sumatran orangutan).